A 264-amino-acid polypeptide reads, in one-letter code: Thymidylate synthase (264 aa).

Position 21 (Arg21) interacts with dUMP. His51 provides a ligand contact to (6R)-5,10-methylene-5,6,7,8-tetrahydrofolate. A dUMP-binding site is contributed by 126-127 (RR). The active-site Nucleophile is Cys146. DUMP is bound by residues 166 to 169 (RSAD), Asn177, and 207 to 209 (HLY). Asp169 contributes to the (6R)-5,10-methylene-5,6,7,8-tetrahydrofolate binding site. Ala263 serves as a coordination point for (6R)-5,10-methylene-5,6,7,8-tetrahydrofolate.

It belongs to the thymidylate synthase family. Bacterial-type ThyA subfamily. As to quaternary structure, homodimer.

The protein resides in the cytoplasm. The catalysed reaction is dUMP + (6R)-5,10-methylene-5,6,7,8-tetrahydrofolate = 7,8-dihydrofolate + dTMP. It functions in the pathway pyrimidine metabolism; dTTP biosynthesis. Its function is as follows. Catalyzes the reductive methylation of 2'-deoxyuridine-5'-monophosphate (dUMP) to 2'-deoxythymidine-5'-monophosphate (dTMP) while utilizing 5,10-methylenetetrahydrofolate (mTHF) as the methyl donor and reductant in the reaction, yielding dihydrofolate (DHF) as a by-product. This enzymatic reaction provides an intracellular de novo source of dTMP, an essential precursor for DNA biosynthesis. The chain is Thymidylate synthase from Azoarcus sp. (strain BH72).